We begin with the raw amino-acid sequence, 189 residues long: Interferon alpha-C (189 aa).

An N-terminal signal peptide occupies residues 1–23 (MAPAWSFRLALLLLSCNAICSLG). Cystine bridges form between C24/C122 and C52/C162.

It belongs to the alpha/beta interferon family.

The protein localises to the secreted. Its function is as follows. Produced by macrophages, IFN-alpha have antiviral activities. Interferon stimulates the production of two enzymes: a protein kinase and an oligoadenylate synthetase. This Bos taurus (Bovine) protein is Interferon alpha-C (IFNAC).